The chain runs to 537 residues: Copine-1 (537 aa).

2 consecutive C2 domains span residues Met-1–Leu-114 and Gly-123–His-245. Positions 21, 27, 80, 82, 92, 153, and 159 each coordinate Ca(2+). At Lys-171 the chain carries N6-acetyllysine. Positions 214, 216, and 222 each coordinate Ca(2+). A VWFA domain is found at Asn-285–Val-505.

The protein belongs to the copine family. In terms of assembly, homodimer; homodimerizes via its C2 domains. Interacts with p65/RELA (via N-terminus); this interaction induces proteolytic cleavage of p65/RELA subunit and inhibition of NF-kappa-B transcriptional activity. Interacts (via VWFA domain) with ACTB, CCDC22, MYCBP2, PPP5C, RDX and UBE2O. Ca(2+) is required as a cofactor. In terms of tissue distribution, expressed in liver, spleen, muscle, testis, adrenal (at protein level).

Its subcellular location is the nucleus. The protein resides in the cytoplasm. The protein localises to the cell membrane. Functionally, calcium-dependent phospholipid-binding protein that plays a role in calcium-mediated intracellular processes. Involved in the TNF-alpha receptor signaling pathway in a calcium-dependent manner. Exhibits calcium-dependent phospholipid binding properties. Plays a role in neuronal progenitor cell differentiation; induces neurite outgrowth via a AKT-dependent signaling cascade and calcium-independent manner. May recruit target proteins to the cell membrane in a calcium-dependent manner. May function in membrane trafficking. Involved in TNF-alpha-induced NF-kappa-B transcriptional repression by inducing endoprotease processing of the transcription factor NF-kappa-B p65/RELA subunit. Also induces endoprotease processing of NF-kappa-B p50/NFKB1, p52/NFKB2, RELB and REL. This is Copine-1 from Bos taurus (Bovine).